The sequence spans 77 residues: NAD(P)H-quinone oxidoreductase subunit L (77 aa).

2 consecutive transmembrane segments (helical) span residues leucine 12 to tyrosine 32 and leucine 47 to leucine 67.

It belongs to the complex I NdhL subunit family. As to quaternary structure, NDH-1 can be composed of about 15 different subunits; different subcomplexes with different compositions have been identified which probably have different functions.

The protein localises to the cellular thylakoid membrane. The catalysed reaction is a plastoquinone + NADH + (n+1) H(+)(in) = a plastoquinol + NAD(+) + n H(+)(out). It carries out the reaction a plastoquinone + NADPH + (n+1) H(+)(in) = a plastoquinol + NADP(+) + n H(+)(out). In terms of biological role, NDH-1 shuttles electrons from an unknown electron donor, via FMN and iron-sulfur (Fe-S) centers, to quinones in the respiratory and/or the photosynthetic chain. The immediate electron acceptor for the enzyme in this species is believed to be plastoquinone. Couples the redox reaction to proton translocation, and thus conserves the redox energy in a proton gradient. Cyanobacterial NDH-1 also plays a role in inorganic carbon-concentration. This chain is NAD(P)H-quinone oxidoreductase subunit L, found in Prochlorococcus marinus (strain MIT 9301).